The following is a 430-amino-acid chain: Serine hydroxymethyltransferase (430 aa).

120–122 (GHI) serves as a coordination point for (6S)-5,6,7,8-tetrahydrofolate. Lys-226 carries the post-translational modification N6-(pyridoxal phosphate)lysine.

The protein belongs to the SHMT family. In terms of assembly, homodimer. Pyridoxal 5'-phosphate is required as a cofactor.

Its subcellular location is the cytoplasm. The protein operates within amino-acid biosynthesis; glycine biosynthesis; glycine from L-serine: step 1/1. Catalyzes the reversible interconversion of serine and glycine with a modified folate serving as the one-carbon carrier. Also exhibits a pteridine-independent aldolase activity toward beta-hydroxyamino acids, producing glycine and aldehydes, via a retro-aldol mechanism. The chain is Serine hydroxymethyltransferase from Pyrobaculum aerophilum (strain ATCC 51768 / DSM 7523 / JCM 9630 / CIP 104966 / NBRC 100827 / IM2).